Consider the following 281-residue polypeptide: 3-hydroxybutyryl-CoA dehydrogenase (281 aa).

This sequence belongs to the 3-hydroxyacyl-CoA dehydrogenase family.

It catalyses the reaction (3S)-3-hydroxybutanoyl-CoA + NADP(+) = acetoacetyl-CoA + NADPH + H(+). Its pathway is lipid metabolism; butanoate metabolism. In Clostridioides difficile (Peptoclostridium difficile), this protein is 3-hydroxybutyryl-CoA dehydrogenase (hbd).